A 63-amino-acid chain; its full sequence is uncharacterized protein (63 aa).

Residues 1 to 21 (MNRALILTFVLFFALFAISSA) form the signal peptide.

This is an uncharacterized protein from Dictyostelium discoideum (Social amoeba).